A 147-amino-acid chain; its full sequence is 18 kDa antigen 1 (147 aa).

The 111-residue stretch at 21–131 (TPTRPAVMPM…RPRKIAVGAA (111 aa)) folds into the sHSP domain.

Belongs to the small heat shock protein (HSP20) family.

Its function is as follows. Not known. This protein is one of the major immune reactive proteins in mycobacteria. The sequence is that of 18 kDa antigen 1 from Mycobacterium avium.